Here is a 339-residue protein sequence, read N- to C-terminus: MKLDFKHLTQFKDIIELDKRPVKLDERETFNVSWGIDENYQVGAAISIASILENNKQNKFTFHIIADYLDKEYIELLSQLATKYQTVIKLYLIDSEPLKALPQSNIWPVSIYYRLLSFDYFSARLDSLLYLDADIVCKGSLNELIALEFKDEYGAVVIDVDAMQSKSAERLCNEDFNGSYFNSGVMYINLREWLKQRLTEKFFDLLSDESIIKKLKYPDQDILNLMFLHHAKILPRKYNCIYTIKSEFEEKNSEYYTRFINDDTVFIHYTGITKPWHDWANYASADYFRNIYNISPWRNIPYKKAVKKHEHKEKYKHLLYQKKFLDGVFTAIKYNVMKG.

UDP contacts are provided by residues 35 to 40 and 132 to 133; these read GIDENY and DA. Mg(2+) is bound by residues D132 and D134. Short sequence motifs (DXD) lie at residues 132 to 134 and 219 to 221; these read DAD and DQD. A Mg(2+)-binding site is contributed by H268. Position 268-274 (268-274) interacts with UDP; sequence HYTGITK.

The protein belongs to the glycosyltransferase 8 family. Mg(2+) serves as cofactor.

The protein localises to the cell inner membrane. The catalysed reaction is UDP-glucose + [lipopolysaccharide] = UDP + D-glucosyl-[lipopolysaccharide].. It participates in bacterial outer membrane biogenesis; LPS core biosynthesis. Its function is as follows. Glucosyltransferase involved in the biosynthesis of the core oligosaccharide region of lipopolysaccharide (LPS). Catalyzes the addition of a glucose (glucose II) to the outer-core galactose I. Has a marked preference for its specific donor substrate, but it appears to have a relaxed specificity for alternate LPS acceptor residues, providing the overall size of the acceptor is conserved. The chain is Lipopolysaccharide 1,2-glucosyltransferase from Escherichia coli.